Here is a 588-residue protein sequence, read N- to C-terminus: Aspartate--tRNA ligase (588 aa).

Position 174 (Glu174) interacts with L-aspartate. Residues 198–201 (QLFK) are aspartate. Arg220 serves as a coordination point for L-aspartate. Residues 220-222 (RDE) and Gln229 contribute to the ATP site. Residue His448 participates in L-aspartate binding. Residue Glu482 participates in ATP binding. Arg489 lines the L-aspartate pocket. 534–537 (GLDR) provides a ligand contact to ATP.

It belongs to the class-II aminoacyl-tRNA synthetase family. Type 1 subfamily. As to quaternary structure, homodimer.

The protein localises to the cytoplasm. It carries out the reaction tRNA(Asp) + L-aspartate + ATP = L-aspartyl-tRNA(Asp) + AMP + diphosphate. Catalyzes the attachment of L-aspartate to tRNA(Asp) in a two-step reaction: L-aspartate is first activated by ATP to form Asp-AMP and then transferred to the acceptor end of tRNA(Asp). This chain is Aspartate--tRNA ligase, found in Exiguobacterium sibiricum (strain DSM 17290 / CCUG 55495 / CIP 109462 / JCM 13490 / 255-15).